The chain runs to 281 residues: Phosphatidylserine decarboxylase proenzyme (281 aa).

Residues Asp-90, His-143, and Ser-248 each act as charge relay system; for autoendoproteolytic cleavage activity in the active site. Ser-248 functions as the Schiff-base intermediate with substrate; via pyruvic acid; for decarboxylase activity in the catalytic mechanism. Ser-248 carries the post-translational modification Pyruvic acid (Ser); by autocatalysis.

The protein belongs to the phosphatidylserine decarboxylase family. PSD-B subfamily. Prokaryotic type I sub-subfamily. As to quaternary structure, heterodimer of a large membrane-associated beta subunit and a small pyruvoyl-containing alpha subunit. It depends on pyruvate as a cofactor. Post-translationally, is synthesized initially as an inactive proenzyme. Formation of the active enzyme involves a self-maturation process in which the active site pyruvoyl group is generated from an internal serine residue via an autocatalytic post-translational modification. Two non-identical subunits are generated from the proenzyme in this reaction, and the pyruvate is formed at the N-terminus of the alpha chain, which is derived from the carboxyl end of the proenzyme. The autoendoproteolytic cleavage occurs by a canonical serine protease mechanism, in which the side chain hydroxyl group of the serine supplies its oxygen atom to form the C-terminus of the beta chain, while the remainder of the serine residue undergoes an oxidative deamination to produce ammonia and the pyruvoyl prosthetic group on the alpha chain. During this reaction, the Ser that is part of the protease active site of the proenzyme becomes the pyruvoyl prosthetic group, which constitutes an essential element of the active site of the mature decarboxylase.

It localises to the cell membrane. It carries out the reaction a 1,2-diacyl-sn-glycero-3-phospho-L-serine + H(+) = a 1,2-diacyl-sn-glycero-3-phosphoethanolamine + CO2. Its pathway is phospholipid metabolism; phosphatidylethanolamine biosynthesis; phosphatidylethanolamine from CDP-diacylglycerol: step 2/2. In terms of biological role, catalyzes the formation of phosphatidylethanolamine (PtdEtn) from phosphatidylserine (PtdSer). This is Phosphatidylserine decarboxylase proenzyme from Francisella philomiragia subsp. philomiragia (strain ATCC 25017 / CCUG 19701 / FSC 153 / O#319-036).